A 166-amino-acid chain; its full sequence is Large ribosomal subunit protein uL10 (166 aa).

It belongs to the universal ribosomal protein uL10 family. In terms of assembly, part of the ribosomal stalk of the 50S ribosomal subunit. The N-terminus interacts with L11 and the large rRNA to form the base of the stalk. The C-terminus forms an elongated spine to which L12 dimers bind in a sequential fashion forming a multimeric L10(L12)X complex.

In terms of biological role, forms part of the ribosomal stalk, playing a central role in the interaction of the ribosome with GTP-bound translation factors. This chain is Large ribosomal subunit protein uL10, found in Aeromonas hydrophila subsp. hydrophila (strain ATCC 7966 / DSM 30187 / BCRC 13018 / CCUG 14551 / JCM 1027 / KCTC 2358 / NCIMB 9240 / NCTC 8049).